A 451-amino-acid chain; its full sequence is Adenylyltransferase and sulfurtransferase MOCS3 (451 aa).

Thr60 carries the post-translational modification Phosphothreonine. ATP is bound by residues Gly99, Asp120, Ser127 to Arg131, Lys144, and Asp188 to Asn189. Residues Cys229 and Cys232 each contribute to the Zn(2+) site. Cys246 functions as the Glycyl thioester intermediate; for adenylyltransferase activity in the catalytic mechanism. 2 residues coordinate Zn(2+): Cys304 and Cys307. The region spanning Gln353–Pro449 is the Rhodanese domain. Cys408 (cysteine persulfide intermediate; for sulfurtransferase activity) is an active-site residue.

This sequence in the N-terminal section; belongs to the HesA/MoeB/ThiF family. UBA4 subfamily. It depends on Zn(2+) as a cofactor.

It localises to the cytoplasm. It is found in the cytosol. The enzyme catalyses [molybdopterin-synthase sulfur-carrier protein]-C-terminal Gly-Gly + ATP + H(+) = [molybdopterin-synthase sulfur-carrier protein]-C-terminal Gly-Gly-AMP + diphosphate. It catalyses the reaction [molybdopterin-synthase sulfur-carrier protein]-C-terminal Gly-Gly-AMP + S-sulfanyl-L-cysteinyl-[cysteine desulfurase] + AH2 = [molybdopterin-synthase sulfur-carrier protein]-C-terminal-Gly-aminoethanethioate + L-cysteinyl-[cysteine desulfurase] + A + AMP + 2 H(+). It functions in the pathway tRNA modification; 5-methoxycarbonylmethyl-2-thiouridine-tRNA biosynthesis. It participates in cofactor biosynthesis; molybdopterin biosynthesis. Plays a central role in 2-thiolation of mcm(5)S(2)U at tRNA wobble positions of cytosolic tRNA(Lys), tRNA(Glu) and tRNA(Gln). Also essential during biosynthesis of the molybdenum cofactor. Acts by mediating the C-terminal thiocarboxylation of sulfur carriers URM1 and MOCS2A. Its N-terminus first activates URM1 and MOCS2A as acyl-adenylates (-COAMP), then the persulfide sulfur on the catalytic cysteine is transferred to URM1 and MOCS2A to form thiocarboxylation (-COSH) of their C-terminus. The reaction probably involves hydrogen sulfide that is generated from the persulfide intermediate and that acts as a nucleophile towards URM1 and MOCS2A. Subsequently, a transient disulfide bond is formed. Does not use thiosulfate as sulfur donor; NFS1 probably acting as a sulfur donor for thiocarboxylation reactions. The sequence is that of Adenylyltransferase and sulfurtransferase MOCS3 from Drosophila ananassae (Fruit fly).